Reading from the N-terminus, the 208-residue chain is Uracil phosphoribosyltransferase (208 aa).

5-phospho-alpha-D-ribose 1-diphosphate contacts are provided by residues arginine 78, arginine 103, and 130–138 (DPMLAIGGS). Uracil is bound by residues isoleucine 193 and 198–200 (GDA). Position 199 (aspartate 199) interacts with 5-phospho-alpha-D-ribose 1-diphosphate.

Belongs to the UPRTase family. Requires Mg(2+) as cofactor.

It carries out the reaction UMP + diphosphate = 5-phospho-alpha-D-ribose 1-diphosphate + uracil. The protein operates within pyrimidine metabolism; UMP biosynthesis via salvage pathway; UMP from uracil: step 1/1. With respect to regulation, allosterically activated by GTP. Functionally, catalyzes the conversion of uracil and 5-phospho-alpha-D-ribose 1-diphosphate (PRPP) to UMP and diphosphate. The polypeptide is Uracil phosphoribosyltransferase (Vibrio cholerae serotype O1 (strain ATCC 39315 / El Tor Inaba N16961)).